Reading from the N-terminus, the 379-residue chain is Cytochrome b (379 aa).

The next 4 membrane-spanning stretches (helical) occupy residues 33–53 (FGSL…FLAM), 77–98 (WLIR…YLHI), 113–133 (WNIG…GYVL), and 178–198 (FFAF…LHLL). Residues histidine 83 and histidine 97 each coordinate heme b. Histidine 182 and histidine 196 together coordinate heme b. Histidine 201 is an a ubiquinone binding site. Helical transmembrane passes span 226 to 246 (YKDL…ALFY), 288 to 308 (LGGV…PILH), 320 to 340 (ASQL…WIGG), and 347 to 367 (YIII…VLNP).

Belongs to the cytochrome b family. In terms of assembly, the cytochrome bc1 complex contains 3 respiratory subunits (MT-CYB, CYC1 and UQCRFS1), 2 core proteins (UQCRC1 and UQCRC2) and probably 6 low-molecular weight proteins. It depends on heme b as a cofactor.

The protein resides in the mitochondrion inner membrane. Functionally, component of the ubiquinol-cytochrome c reductase complex (complex III or cytochrome b-c1 complex) that is part of the mitochondrial respiratory chain. The b-c1 complex mediates electron transfer from ubiquinol to cytochrome c. Contributes to the generation of a proton gradient across the mitochondrial membrane that is then used for ATP synthesis. The polypeptide is Cytochrome b (mt-cyb) (Anguilla rostrata (American eel)).